Here is a 2474-residue protein sequence, read N- to C-terminus: Polyprotein P1234 (2474 aa).

One can recognise an Alphavirus-like MT domain in the interval 28–259 (EPRQVTPNDH…ESRKLLKSWH (232 aa)). The active-site For mRNA-capping enzyme nsP1 activity is the His37. The Zn(2+) site is built by His79, Glu129, Cys134, and Cys141. The segment at 295–450 (GLYGKTTGYA…QKVQAEFDSF (156 aa)) is membrane-binding and oligomerization. Residues Cys417 and Cys419 are each lipidated (S-palmitoyl cysteine; by host). A disordered region spans residues 482-502 (PYSGDAQEARDAEKEAEEERE). The 153-residue stretch at 690-842 (DLTNPPYHEF…HNICTQVYHK (153 aa)) folds into the (+)RNA virus helicase ATP-binding domain. An a ribonucleoside 5'-triphosphate-binding site is contributed by 721 to 728 (GVPGSGKS). In terms of domain architecture, (+)RNA virus helicase C-terminal spans 843 to 991 (SISRRCTLPV…IKEWEVEHAS (149 aa)). Positions 1004-1327 (DTFQNKANVC…NQLNAAFVGQ (324 aa)) constitute a Peptidase C9 domain. Positions 1005–1024 (TFQNKANVCWAKSLVPILET) are nucleolus localization signal. Cys1013 functions as the For cysteine protease nsP2 activity in the catalytic mechanism. Residues 1058-1067 (TRMYGVDLDS) carry the Nuclear export signal motif. Catalysis depends on His1083, which acts as the For cysteine protease nsP2 activity. Positions 1182–1186 (PTKRV) match the Nuclear localization signal motif. The 160-residue stretch at 1334 to 1493 (APSYRVKRMD…KISEAIQMRT (160 aa)) folds into the Macro domain. Asp1343, Asn1357, Gly1365, Gly1445, Val1446, and Tyr1447 together coordinate ADP-D-ribose. Positions 1595, 1597, 1620, and 1638 each coordinate Zn(2+). The tract at residues 1651 to 1672 (RVSPREYRPSQESVQEASTTTS) is disordered. Positions 1659–1857 (PSQESVQEAS…TCSDTDDELR (199 aa)) are HVD. Over residues 1660-1672 (SQESVQEASTTTS) the composition is skewed to polar residues. Interaction with host CD2AP regions lie at residues 1726-1739 (VMST…RRRR) and 1756-1767 (PMASVRFFRAEL). Residues 1745–1793 (VTCDEREGNITPMASVRFFRAELCPVVQETAETRDTAMSLQAPPSTATE) form an interaction with host FHL1 region. The short motif at 1812–1815 (FGDF) is the FGDF; binding to host G3BP1 element. The interval 1820–1828 (IESLSSELL) is interaction with host CD2AP. Positions 1830–1833 (FGDF) match the FGDF; binding to host G3BP1 motif. The RdRp catalytic domain occupies 2228–2343 (DTVLETDIAS…HGVVSDELMA (116 aa)).

As to quaternary structure, homododecamer. The enzyme forms a membrane-associated dodecameric ring with a central channel for the exchange of between the viral replication factories and the host cytoplasm. Interacts with non-structural protein 3. Interacts with RNA-directed RNA polymerase nsP4. Interacts with protease nsP2. Interacts with itself. Interacts with host STING1; this interaction results in inhibition of cGAS-STING signaling and increased levels of palmitoylation and protein stabilization of nsP1. Interacts with host TMEM45B; this interaction leads to viral replication inhibition. In terms of assembly, interacts with mRNA-capping enzyme nsP1. Interacts (via C-terminus) with host G3BP1; this interaction inhibits the formation of host stress granules on viral mRNAs and the nsp3-G3BP1 complexes bind viral RNAs and probably orchestrate the assembly of viral replication complexes. Interacts (via C-terminus) with host G3BP2; this interaction inhibits the formation of host stress granules on viral mRNAs and the nsp3-G3BP2 complexes bind viral RNAs and probably orchestrate the assembly of viral replication complexes. Interacts (via C-terminus) with host NAP1L1. Interacts (via C-terminus) with host NAP1L4. Interacts (via C-terminus) with host DHX9; this interaction allows the recruitment of DHX9 to the plasma membrane, where it associates with viral replication complexes and may play a role in the translation-to-replication switch. Interacts (via C-terminus) with host FHL1 (via LIM domain 1); this interaction is required for viral RNA replication. Interacts (via C-terminus) with host CD2AP; this interaction plays a role in initiation of viral replication. Interacts (via C-terminus) with host SH3KBP1; this interaction plays a role in initiation of viral replication. Interacts with mRNA-capping enzyme nsP1. Interacts with protease nsP2. interacts with itself. Interacts with host TMEM45B; this interaction leads to viral replication inhibition. As to quaternary structure, interacts with RNA-directed RNA polymerase nsP4. Interacts with mRNA-capping enzyme nsP1. Interacts with KPNA1/karyopherin-alpha1; this interaction probably allows the active transport of protease nsP2 into the host nucleus. Requires Mg(2+) as cofactor. It depends on Mn(2+) as a cofactor. In terms of processing, specific enzymatic cleavages in vivo yield mature proteins. The processing of the polyprotein is temporally regulated. In early stages (1.7 hpi), P1234 is first cleaved in trans through its nsP2 protease activity, releasing P123 and nsP4, which associate to form the early replication complex. At the same time, P1234 is also cut at the nsP1/nsP2 site early in infection but with lower efficiency. After replication of the viral minus-strand RNAs (4 hpi), the polyproteins are cut at the nsP1/nsP2 and nsP2/nsP3 sites very efficiently, preventing accumulation of P123 and P1234 and allowing the formation of the late replication complex. NsP3/nsP4 site is not cleaved anymore and P34 is produced rather than nsP4. Post-translationally, specific enzymatic cleavages in vivo yield mature proteins. The processing of the polyprotein is temporally regulated. In early stages (1.7 hpi), P123 is cleaved at the nsP1/nsP2 site with low efficiency. After replication of the viral minus-strand RNAs (4 hpi), the polyproteins are cut at the nsP1/nsP2 and nsP2/nsP3 sites very efficiently, preventing accumulation of P123 and allowing the formation of the late replication complex. Palmitoylated by host palmitoyltransferases ZDHHC2 and ZDHHC19. Palmitoylation is increased by the interacton with host STING1. In terms of processing, phosphorylated by host on serines and threonines. Post-translationally, ubiquitinated; targets the protein for rapid degradation via the ubiquitin system. Nsp4 is present in extremely low quantities due to low frequency of translation through the amber stop-codon and the degradation by the ubiquitin pathway.

The protein resides in the host cytoplasmic vesicle membrane. It localises to the host cell membrane. Its subcellular location is the host cell projection. The protein localises to the host filopodium. It is found in the host nucleus. The protein resides in the host cytoplasm. The enzyme catalyses GTP + S-adenosyl-L-methionine = N(7)-methyl-GTP + S-adenosyl-L-homocysteine. It carries out the reaction N(7)-methyl-GTP + L-histidyl-[protein] = N(tele)-(N(7)-methylguanosine 5'-phospho)-L-histidyl-[protein] + diphosphate. The catalysed reaction is N(tele)-(N(7)-methylguanosine 5'-phospho)-L-histidyl-[protein] + a 5'-end diphospho-(purine-ribonucleoside) in mRNA + H(+) = a 5'-end (N(7)-methyl 5'-triphosphoguanosine)-(purine-ribonucleoside) in mRNA + L-histidyl-[protein]. It catalyses the reaction a 5'-end triphospho-ribonucleoside in mRNA + H2O = a 5'-end diphospho-ribonucleoside in mRNA + phosphate + H(+). The enzyme catalyses a ribonucleoside 5'-triphosphate + H2O = a ribonucleoside 5'-diphosphate + phosphate + H(+). It carries out the reaction ATP + H2O = ADP + phosphate + H(+). The catalysed reaction is RNA(n) + a ribonucleoside 5'-triphosphate = RNA(n+1) + diphosphate. It catalyses the reaction 4-O-(ADP-D-ribosyl)-L-aspartyl-[protein] + H2O = L-aspartyl-[protein] + ADP-D-ribose + H(+). The enzyme catalyses 5-O-(ADP-D-ribosyl)-L-glutamyl-[protein] + H2O = L-glutamyl-[protein] + ADP-D-ribose + H(+). It carries out the reaction RNA(n) + ATP = RNA(n)-3'-adenine ribonucleotide + diphosphate. The catalysed reaction is ADP-alpha-D-ribose 1''-phosphate + H2O = ADP-D-ribose + phosphate. Its function is as follows. Inactive precursor of the viral replicase, which is activated by cleavages carried out by the viral protease nsP2. Functionally, the early replication complex formed by the polyprotein P123 and nsP4 synthesizes minus-strand RNAs. As soon P123 is cleaved into mature proteins, the plus-strand RNAs synthesis begins. Cytoplasmic capping enzyme that catalyzes two virus-specific reactions: methyltransferase and guanylyltransferase. mRNA-capping is necessary since all viral RNAs are synthesized in the cytoplasm, and host capping enzymes are restricted to the nucleus. The enzymatic reaction involves a covalent link between 7-methyl-GMP and nsP1, whereas eukaryotic capping enzymes form a covalent complex only with GMP. nsP1 capping consists in the following reactions: GTP is first methylated into 7-methyl-GMP and then is covalently linked to nsP1 to form the m7GMp-nsP1 complex from which 7-methyl-GMP complex is transferred to the mRNA to create the cap structure. NsP1 is also needed for the initiation of the minus-strand RNAs synthesis. At the initiation of virus replication, mediates the assembly of the viral replication complex made of the non-structural proteins, the association of this complex with the inner face of the plasma membrane and the formation of membranous spherules that serve as replication complex factories. Forms the neck of these spherules with a central channel for mediating communication and the passage of RNA, nucleotides, and small proteins between the viral replication complex and the host cytoplasm. Palmitoylated nsP1 is remodeling host cell cytoskeleton, and induces filopodium-like structure formation at the surface of the host cell. In terms of biological role, multifunctional protein whose N-terminus is part of the RNA polymerase complex and displays NTPase, RNA triphosphatase and helicase activities. NTPase and RNA triphosphatase are involved in viral RNA capping and helicase keeps a check on the dsRNA replication intermediates. The C-terminus harbors a protease that specifically cleaves the polyproteins and releases the mature proteins. Required for the shutoff of minus-strand RNAs synthesis. Specifically inhibits the host IFN response by promoting the nuclear export of host STAT1. Also inhibits host transcription by inducing the rapid proteasome-dependent degradation of POLR2A, a catalytic subunit of the RNAPII complex. The resulting inhibition of cellular protein synthesis serves to ensure maximal viral gene expression and to evade host immune response. Its function is as follows. Seems to be essential for minus-strand RNAs and subgenomic 26S mRNAs synthesis. Displays mono-ADP-ribosylhydrolase activity. ADP-ribosylation is a post-translational modification that controls various processes of the host cell and the virus probably needs to revert it for optimal viral replication. Binds proteins of G3BP family and sequesters them into the viral RNA replication complexes thereby inhibiting the formation of host stress granules on viral mRNAs. The nsp3-G3BP complexes bind viral RNAs and probably orchestrate the assembly of viral replication complexes, thanks to the ability of G3BP family members to self-assemble and bind DNA. Functionally, RNA dependent RNA polymerase. Replicates genomic and antigenomic RNA by recognizing replications specific signals. The early replication complex formed by the polyprotein P123 and nsP4 synthesizes minus-strand RNAs. The late replication complex composed of fully processed nsP1-nsP4 is responsible for the production of genomic and subgenomic plus-strand RNAs. This Chikungunya virus (strain S27-African prototype) (CHIKV) protein is Polyprotein P1234.